Reading from the N-terminus, the 317-residue chain is Ribosomal RNA small subunit methyltransferase H (317 aa).

S-adenosyl-L-methionine-binding positions include 34–36, Asp53, Phe80, Asp98, and Gln105; that span reads GGH.

It belongs to the methyltransferase superfamily. RsmH family.

The protein localises to the cytoplasm. It carries out the reaction cytidine(1402) in 16S rRNA + S-adenosyl-L-methionine = N(4)-methylcytidine(1402) in 16S rRNA + S-adenosyl-L-homocysteine + H(+). Specifically methylates the N4 position of cytidine in position 1402 (C1402) of 16S rRNA. The sequence is that of Ribosomal RNA small subunit methyltransferase H from Tropheryma whipplei (strain TW08/27) (Whipple's bacillus).